Consider the following 199-residue polypeptide: Recombination protein RecR (199 aa).

Residues 57–72 (CQACRTFTEETLCPIC) form a C4-type zinc finger. A Toprim domain is found at 81–176 (EVICVVETPA…SVSRIAHGVP (96 aa)).

This sequence belongs to the RecR family.

Its function is as follows. May play a role in DNA repair. It seems to be involved in an RecBC-independent recombinational process of DNA repair. It may act with RecF and RecO. In Shewanella woodyi (strain ATCC 51908 / MS32), this protein is Recombination protein RecR.